The sequence spans 349 residues: 5-deoxyribose 1-phosphate isomerase (349 aa).

Substrate is bound by residues 49-51 (RGA), Arg-92, and Gln-199. Catalysis depends on Asp-240, which acts as the Proton donor. 250 to 251 (NK) lines the substrate pocket.

It belongs to the EIF-2B alpha/beta/delta subunits family. DrdI subfamily.

The catalysed reaction is 5-deoxy-alpha-D-ribose 1-phosphate = 5-deoxy-D-ribulose 1-phosphate. It participates in carbohydrate degradation. Functionally, catalyzes the isomerization of 5-deoxy-alpha-D-ribose 1-phosphate to 5-deoxy-D-ribulose 1-phosphate, as part of a 5-deoxyribose salvage pathway that recycles this toxic radical SAM enzyme by-product to mainstream metabolites. This Clostridium botulinum (strain Langeland / NCTC 10281 / Type F) protein is 5-deoxyribose 1-phosphate isomerase.